The following is a 372-amino-acid chain: Methylthioribose-1-phosphate isomerase (372 aa).

Aspartate 252 acts as the Proton donor in catalysis.

Belongs to the eIF-2B alpha/beta/delta subunits family. MtnA subfamily.

It localises to the cytoplasm. Its subcellular location is the nucleus. It carries out the reaction 5-(methylsulfanyl)-alpha-D-ribose 1-phosphate = 5-(methylsulfanyl)-D-ribulose 1-phosphate. It functions in the pathway amino-acid biosynthesis; L-methionine biosynthesis via salvage pathway; L-methionine from S-methyl-5-thio-alpha-D-ribose 1-phosphate: step 1/6. Its function is as follows. Catalyzes the interconversion of methylthioribose-1-phosphate (MTR-1-P) into methylthioribulose-1-phosphate (MTRu-1-P). The polypeptide is Methylthioribose-1-phosphate isomerase (Yarrowia lipolytica (strain CLIB 122 / E 150) (Yeast)).